A 430-amino-acid chain; its full sequence is tRNA(Ile)-lysidine synthase (430 aa).

Position 27–32 (27–32 (SGGSDS)) interacts with ATP.

It belongs to the tRNA(Ile)-lysidine synthase family.

It is found in the cytoplasm. It carries out the reaction cytidine(34) in tRNA(Ile2) + L-lysine + ATP = lysidine(34) in tRNA(Ile2) + AMP + diphosphate + H(+). Functionally, ligates lysine onto the cytidine present at position 34 of the AUA codon-specific tRNA(Ile) that contains the anticodon CAU, in an ATP-dependent manner. Cytidine is converted to lysidine, thus changing the amino acid specificity of the tRNA from methionine to isoleucine. The chain is tRNA(Ile)-lysidine synthase from Rickettsia typhi (strain ATCC VR-144 / Wilmington).